Here is a 78-residue protein sequence, read N- to C-terminus: ATP synthase subunit a (78 aa).

A helical membrane pass occupies residues 34-54; sequence LTNIGLYLTIGIFLILTYSLL.

This sequence belongs to the ATPase A chain family. F-type ATPases have 2 components, CF(1) - the catalytic core - and CF(0) - the membrane proton channel. CF(1) has five subunits: alpha(3), beta(3), gamma(1), delta(1), epsilon(1). CF(0) has three main subunits: a, b and c.

It is found in the mitochondrion inner membrane. Functionally, mitochondrial membrane ATP synthase (F(1)F(0) ATP synthase or Complex V) produces ATP from ADP in the presence of a proton gradient across the membrane which is generated by electron transport complexes of the respiratory chain. F-type ATPases consist of two structural domains, F(1) - containing the extramembraneous catalytic core and F(0) - containing the membrane proton channel, linked together by a central stalk and a peripheral stalk. During catalysis, ATP synthesis in the catalytic domain of F(1) is coupled via a rotary mechanism of the central stalk subunits to proton translocation. Key component of the proton channel; it may play a direct role in the translocation of protons across the membrane. The sequence is that of ATP synthase subunit a (atp6) from Aspergillus amstelodami.